Reading from the N-terminus, the 529-residue chain is Zinc finger protein 490 (529 aa).

Residues 1–53 (MRRNSSLSFQMERPLEEQVQSKWSSSQGRTGTGGSDVLQMQNSEHHGQSIKTQ) are disordered. A KRAB domain is found at 57–132 (ISLEDVAVNF…ALCENKEDCP (76 aa)). C2H2-type zinc fingers lie at residues 156–178 (CDCS…MRSH), 194–216 (HKCK…ERIH), 222–244 (YECK…IRIH), 250–272 (YECK…EKNH), 278–300 (YKCK…ERTH), 306–328 (YECK…EKTH), 334–356 (FVCR…VKTH), 362–384 (YTCK…ERTH), 390–412 (YECK…ERVH), 418–440 (YECK…ERTH), 446–468 (YECK…ERSH), 474–496 (CECK…KRIH), and 502–524 (FQCR…ERTH).

Belongs to the krueppel C2H2-type zinc-finger protein family.

It is found in the nucleus. Functionally, may be involved in transcriptional regulation. The polypeptide is Zinc finger protein 490 (ZNF490) (Homo sapiens (Human)).